We begin with the raw amino-acid sequence, 171 residues long: Protein BTG1 (171 aa).

Phosphoserine is present on serine 159.

This sequence belongs to the BTG family. In terms of assembly, interacts with CNOT7 and CNOT8.

In terms of biological role, anti-proliferative protein. The protein is Protein BTG1 (BTG1) of Homo sapiens (Human).